Here is a 308-residue protein sequence, read N- to C-terminus: Methionyl-tRNA formyltransferase (308 aa).

Serine 110–proline 113 serves as a coordination point for (6S)-5,6,7,8-tetrahydrofolate.

It belongs to the Fmt family.

The enzyme catalyses L-methionyl-tRNA(fMet) + (6R)-10-formyltetrahydrofolate = N-formyl-L-methionyl-tRNA(fMet) + (6S)-5,6,7,8-tetrahydrofolate + H(+). Functionally, attaches a formyl group to the free amino group of methionyl-tRNA(fMet). The formyl group appears to play a dual role in the initiator identity of N-formylmethionyl-tRNA by promoting its recognition by IF2 and preventing the misappropriation of this tRNA by the elongation apparatus. The polypeptide is Methionyl-tRNA formyltransferase (Neisseria meningitidis serogroup B (strain ATCC BAA-335 / MC58)).